The primary structure comprises 194 residues: Large ribosomal subunit protein eL15 (194 aa).

A disordered region spans residues 164-194 (SAGKKGRGLRNKGIGAEKVRPSIRAHGRRGK). Over residues 184–194 (PSIRAHGRRGK) the composition is skewed to basic residues.

Belongs to the eukaryotic ribosomal protein eL15 family.

The sequence is that of Large ribosomal subunit protein eL15 (rpl15e) from Methanocaldococcus jannaschii (strain ATCC 43067 / DSM 2661 / JAL-1 / JCM 10045 / NBRC 100440) (Methanococcus jannaschii).